The chain runs to 176 residues: ATP synthase subunit b (176 aa).

A helical membrane pass occupies residues 18-38 (FGLDATVWVSIAMLVFLGILV).

The protein belongs to the ATPase B chain family. F-type ATPases have 2 components, F(1) - the catalytic core - and F(0) - the membrane proton channel. F(1) has five subunits: alpha(3), beta(3), gamma(1), delta(1), epsilon(1). F(0) has three main subunits: a(1), b(2) and c(10-14). The alpha and beta chains form an alternating ring which encloses part of the gamma chain. F(1) is attached to F(0) by a central stalk formed by the gamma and epsilon chains, while a peripheral stalk is formed by the delta and b chains.

The protein resides in the cell inner membrane. Functionally, f(1)F(0) ATP synthase produces ATP from ADP in the presence of a proton or sodium gradient. F-type ATPases consist of two structural domains, F(1) containing the extramembraneous catalytic core and F(0) containing the membrane proton channel, linked together by a central stalk and a peripheral stalk. During catalysis, ATP synthesis in the catalytic domain of F(1) is coupled via a rotary mechanism of the central stalk subunits to proton translocation. Component of the F(0) channel, it forms part of the peripheral stalk, linking F(1) to F(0). The protein is ATP synthase subunit b of Sphingopyxis alaskensis (strain DSM 13593 / LMG 18877 / RB2256) (Sphingomonas alaskensis).